We begin with the raw amino-acid sequence, 744 residues long: Cytosolic neutral trehalase (744 aa).

Aspartate 99, aspartate 101, asparagine 103, glutamine 105, and aspartate 110 together coordinate Ca(2+). Substrate-binding positions include arginine 286, 293–294, asparagine 330, 339–341, glutamate 406, arginine 455, and glycine 458; these read WD and RSQ. Active-site proton donor/acceptor residues include aspartate 460 and glutamate 665.

Belongs to the glycosyl hydrolase 37 family. Ca(2+) serves as cofactor.

The protein localises to the cytoplasm. It catalyses the reaction alpha,alpha-trehalose + H2O = alpha-D-glucose + beta-D-glucose. Its pathway is carbohydrate degradation. In terms of biological role, hydrolyzes intracellular trehalose to glucose. The protein is Cytosolic neutral trehalase of Neurospora crassa (strain ATCC 24698 / 74-OR23-1A / CBS 708.71 / DSM 1257 / FGSC 987).